The primary structure comprises 52 residues: Venom peptide 4a (52 aa).

The first 23 residues, 1–23 (MRSAILLVIVAIVAILGFLGVNA), serve as a signal peptide directing secretion. 3 AXPX repeats span residues 23–26 (AEPL), 31–34 (AEPN), and 39–42 (AAPL). Residues 24–41 (EPLPSPLAEPNPHAKAAP) constitute a propeptide that is removed on maturation. Alanine amide is present on A51.

Expressed by the venom gland.

The protein localises to the secreted. This is Venom peptide 4a from Eumenes pomiformis (Potter wasp).